Reading from the N-terminus, the 300-residue chain is ClpXP adapter protein SpxH (300 aa).

Belongs to the SpxH family. As to quaternary structure, interacts with Spx.

It is found in the cytoplasm. Functionally, adapter protein required for efficient degradation of Spx by ClpXP under non-stress conditions. Interaction with Spx stabilizes Spx and exposes the C-terminus of Spx for recognition and proteolysis by ClpXP. This is ClpXP adapter protein SpxH from Shouchella clausii (strain KSM-K16) (Alkalihalobacillus clausii).